A 275-amino-acid chain; its full sequence is Formamidopyrimidine-DNA glycosylase (275 aa).

P2 (schiff-base intermediate with DNA) is an active-site residue. The active-site Proton donor is the E3. The Proton donor; for beta-elimination activity role is filled by K58. DNA-binding residues include H91 and R110. The FPG-type zinc-finger motif lies at 238–272 (QVYGQTGKPCPRCGQAIVKLKVGGRGTHICPKCQK). Residue R262 is the Proton donor; for delta-elimination activity of the active site.

Belongs to the FPG family. Monomer. The cofactor is Zn(2+).

The enzyme catalyses Hydrolysis of DNA containing ring-opened 7-methylguanine residues, releasing 2,6-diamino-4-hydroxy-5-(N-methyl)formamidopyrimidine.. It catalyses the reaction 2'-deoxyribonucleotide-(2'-deoxyribose 5'-phosphate)-2'-deoxyribonucleotide-DNA = a 3'-end 2'-deoxyribonucleotide-(2,3-dehydro-2,3-deoxyribose 5'-phosphate)-DNA + a 5'-end 5'-phospho-2'-deoxyribonucleoside-DNA + H(+). Functionally, involved in base excision repair of DNA damaged by oxidation or by mutagenic agents. Acts as a DNA glycosylase that recognizes and removes damaged bases. Has a preference for oxidized purines, such as 7,8-dihydro-8-oxoguanine (8-oxoG). Has AP (apurinic/apyrimidinic) lyase activity and introduces nicks in the DNA strand. Cleaves the DNA backbone by beta-delta elimination to generate a single-strand break at the site of the removed base with both 3'- and 5'-phosphates. This is Formamidopyrimidine-DNA glycosylase from Streptococcus pyogenes serotype M6 (strain ATCC BAA-946 / MGAS10394).